Consider the following 139-residue polypeptide: UPF0102 protein Caul_0175 (139 aa).

The protein belongs to the UPF0102 family.

This is UPF0102 protein Caul_0175 from Caulobacter sp. (strain K31).